The primary structure comprises 291 residues: MLDFYSQRYLHSERQAWQERIEQGQIEVDGKTVDPTYPLQAGQTLTYWRSPWVEPEVPLQLSVLHRDEDLWAIDKPSGLPVLPGGDFVYHTVLEQLKIQYPQESLFPLHRLGTGTSGLLLLGRSTLGRRELSRQFREHICRKIYRTVIGPCDLPEKFECHQAIGKIPYPQLGYIYAASSHGKPAQSYGRILARSPEKTWLEVEIRTGRPHQIRIHLASLGYPLLGDRLYGPGGVPINCRTARPSDGGYTLHSYQLGFLHLHTQQAIKLTAPLPPELITPEVKTIALETEKH.

This sequence belongs to the pseudouridine synthase RluA family.

The catalysed reaction is a uridine in RNA = a pseudouridine in RNA. This is an uncharacterized protein from Synechocystis sp. (strain ATCC 27184 / PCC 6803 / Kazusa).